Here is a 566-residue protein sequence, read N- to C-terminus: Pyrophosphate--fructose 6-phosphate 1-phosphotransferase subunit beta 1 (566 aa).

At serine 16 the chain carries Phosphoserine. Residue glycine 105 coordinates diphosphate. Position 199 (aspartate 199) interacts with Mg(2+). Substrate is bound by residues 227 to 229 (TID), 266 to 267 (KY), 274 to 276 (MGR), glutamate 335, and 440 to 443 (YEGR). The active-site Proton acceptor is aspartate 229.

The protein belongs to the phosphofructokinase type A (PFKA) family. PPi-dependent PFK group II subfamily. Clade 'Long' sub-subfamily. Tetramer of two alpha (regulatory) and two beta (catalytic) chains. The cofactor is Mg(2+).

The protein localises to the cytoplasm. The catalysed reaction is beta-D-fructose 6-phosphate + diphosphate = beta-D-fructose 1,6-bisphosphate + phosphate + H(+). It functions in the pathway carbohydrate degradation; glycolysis; D-glyceraldehyde 3-phosphate and glycerone phosphate from D-glucose: step 3/4. Allosterically activated by fructose 2,6-bisphosphate. Catalytic subunit of pyrophosphate--fructose 6-phosphate 1-phosphotransferase. Catalyzes the phosphorylation of D-fructose 6-phosphate, the first committing step of glycolysis. Uses inorganic phosphate (PPi) as phosphoryl donor instead of ATP like common ATP-dependent phosphofructokinases (ATP-PFKs), which renders the reaction reversible, and can thus function both in glycolysis and gluconeogenesis. The protein is Pyrophosphate--fructose 6-phosphate 1-phosphotransferase subunit beta 1 of Arabidopsis thaliana (Mouse-ear cress).